A 133-amino-acid polypeptide reads, in one-letter code: Small ribosomal subunit protein eS8 (133 aa).

The disordered stretch occupies residues 1–22; the sequence is MGFYQGPDNRKITGGLKGKHRD.

Belongs to the eukaryotic ribosomal protein eS8 family. In terms of assembly, part of the 30S ribosomal subunit.

The protein is Small ribosomal subunit protein eS8 of Saccharolobus islandicus (strain Y.N.15.51 / Yellowstone #2) (Sulfolobus islandicus).